The following is a 257-amino-acid chain: 5'-nucleotidase SurE (257 aa).

A divalent metal cation-binding residues include Asp8, Asp9, Ser39, and Asn87. The interval Val234 to Gln257 is disordered.

Belongs to the SurE nucleotidase family. It depends on a divalent metal cation as a cofactor.

It localises to the cytoplasm. It catalyses the reaction a ribonucleoside 5'-phosphate + H2O = a ribonucleoside + phosphate. Nucleotidase that shows phosphatase activity on nucleoside 5'-monophosphates. This Natronomonas pharaonis (strain ATCC 35678 / DSM 2160 / CIP 103997 / JCM 8858 / NBRC 14720 / NCIMB 2260 / Gabara) (Halobacterium pharaonis) protein is 5'-nucleotidase SurE.